The chain runs to 281 residues: MKLAFLAGYRGQNFAGSQYQPHKRTVEGEFVAGGIELGLFSDAKEAHFRTAGRTDKGVSARRQLFSITTEKPELAIEALNFHLPDDIWCIGAAEVDEEFYPRYAARERSYRYYFPYPADVSRMQDAASRLIGTHNFSGFAKMEAGRDPVRTVTRAEVFEGKDGCPVFEVAAKSFLWNMVRGMAGALQTIGLGLCEPDVIEELLSSPTARVHPAPAEGLVFWDVVCDLSFTPMRQKREVKRSLAKEAAAARADMHTAEALLEDDPEEFWKKKVIRGYSALMK.

Aspartate 55 (nucleophile) is an active-site residue. Tyrosine 110 is a substrate binding site.

The protein belongs to the tRNA pseudouridine synthase TruA family.

It carries out the reaction uridine(38/39/40) in tRNA = pseudouridine(38/39/40) in tRNA. In terms of biological role, formation of pseudouridine at positions 38, 39 and 40 in the anticodon stem and loop of transfer RNAs. The chain is tRNA pseudouridine synthase A from Methanocorpusculum labreanum (strain ATCC 43576 / DSM 4855 / Z).